We begin with the raw amino-acid sequence, 37 residues long: Translationally-controlled tumor protein homolog (37 aa).

The TCTP domain occupies 1–37 (MKIFRDILTNAEVVXDNDKPMDVLDEIVYAXQGRYIE).

Belongs to the TCTP family. Monomer.

It localises to the cytoplasm. Functionally, binds calcium; exact function not known. The sequence is that of Translationally-controlled tumor protein homolog from Trypanosoma brucei brucei.